The following is a 78-amino-acid chain: Small integral membrane protein 1 (78 aa).

The residue at position 1 (methionine 1) is an N-acetylmethionine. Residues 1–18 (MQPQESHVHYSRWEDGSR) are compositionally biased toward basic and acidic residues. The interval 1–20 (MQPQESHVHYSRWEDGSRDG) is disordered. Topologically, residues 1 to 46 (MQPQESHVHYSRWEDGSRDGVSLGAVSSTEEASRCRRISQRLCTGK) are cytoplasmic. Residues serine 6, serine 17, serine 22, and serine 27 each carry the phosphoserine modification. Residues 47-67 (LGIAMKVLGGVALFWIIFILG) form a helical; Signal-anchor for type II membrane protein membrane-spanning segment. Topologically, residues 68–78 (YLTGYYVHKCK) are extracellular. The segment at 68–78 (YLTGYYVHKCK) is displays the Vel antigen.

This sequence belongs to the SMIM1 family. Homooligomer; disulfide-linked. In terms of tissue distribution, highly expressed in the bone marrow and expressed at lower levels in non-hematopoietic tissues. Highly expressed in erythroleukemia cell lines. Up-regulated in CD34+ hematopoietic progenitors cultured toward red blood cells.

The protein localises to the cell membrane. Its function is as follows. Regulator of red blood cell formation. In Homo sapiens (Human), this protein is Small integral membrane protein 1.